Here is a 394-residue protein sequence, read N- to C-terminus: Elongation factor Tu (394 aa).

The region spanning 10–204 is the tr-type G domain; it reads KPHVNIGTIG…AVDSYIPQPV (195 aa). The segment at 19-26 is G1; it reads GHVDHGKT. GTP is bound at residue 19–26; the sequence is GHVDHGKT. Thr26 lines the Mg(2+) pocket. The G2 stretch occupies residues 60-64; that stretch reads GITIS. Residues 81–84 are G3; the sequence is DCPG. GTP-binding positions include 81–85 and 136–139; these read DCPGH and NKVD. The tract at residues 136–139 is G4; the sequence is NKVD. The segment at 174–176 is G5; it reads SAL.

The protein belongs to the TRAFAC class translation factor GTPase superfamily. Classic translation factor GTPase family. EF-Tu/EF-1A subfamily. Monomer.

Its subcellular location is the cytoplasm. It catalyses the reaction GTP + H2O = GDP + phosphate + H(+). Functionally, GTP hydrolase that promotes the GTP-dependent binding of aminoacyl-tRNA to the A-site of ribosomes during protein biosynthesis. The sequence is that of Elongation factor Tu from Rickettsia helvetica.